A 947-amino-acid polypeptide reads, in one-letter code: Serine-aspartate repeat-containing protein C (947 aa).

The first 50 residues, 1–50 (MNNKKTATNRKGMIPNRLNKFSIRKYSVGTASILVGTTLIFGLSGHEAKA), serve as a signal peptide directing secretion. The disordered stretch occupies residues 51–164 (AEHTNGELNQ…STTPKTTTIK (114 aa)). A ligand binding A region region spans residues 51–495 (AEHTNGELNQ…GSSTANGDQK (445 aa)). A compositionally biased stretch (polar residues) spans 56–71 (GELNQSKNETTAPSEN). Positions 72–83 (KTTKKVDSRQLK) are enriched in basic and acidic residues. Over residues 84–155 (DNTQTATADQ…SNLTQAKDVS (72 aa)) the composition is skewed to polar residues. CNA-B domains lie at 496 to 606 (KYNL…YKTP) and 607 to 717 (KYSL…EEET). The tract at residues 678–927 (TQTGTNTTED…NNSNNGTLFG (250 aa)) is disordered. 2 stretches are compositionally biased toward acidic residues: residues 685-695 (TEDDKDADGGE) and 712-886 (YYEE…DSDS). Residues 910–914 (LPETG) carry the LPXTG sorting signal motif. Low complexity predominate over residues 912-927 (ETGSENNNSNNGTLFG). Thr-913 is subject to Pentaglycyl murein peptidoglycan amidated threonine. The propeptide at 914-947 (GSENNNSNNGTLFGGLFAALGSLLLFGRRKKQNK) is removed by sortase.

This sequence belongs to the serine-aspartate repeat-containing protein (SDr) family. In terms of assembly, homodimerizes; via N2-Domain. Interacts with host NRXN1; this interaction mediates bacterial attachment to host cells.

The protein resides in the secreted. Its subcellular location is the cell wall. In terms of biological role, cell surface-associated calcium-binding protein which plays an important role in adhesion and pathogenesis. Mediates interactions with components of the extracellular matrix such as host NRXN1 to promote bacterial adhesion. This chain is Serine-aspartate repeat-containing protein C (sdrC), found in Staphylococcus aureus (strain USA300).